Here is a 157-residue protein sequence, read N- to C-terminus: MSRRNTAKKTKRTEKSDPIYQSRLVNMVLNRIIKHGKKSLAYRILYRAMKQIQQKTEKNPLLVLRQAIKEVTPRLIVKSRRKSGSTYQVPFEIKPNQGKILAIRWLLEASRKRLGPNMESKFSSELIDATKGKGKAIRKKEETHKMAEANRAFADYL.

The protein belongs to the universal ribosomal protein uS7 family. As to quaternary structure, part of the 30S ribosomal subunit.

The protein resides in the plastid. It is found in the chloroplast. Its function is as follows. One of the primary rRNA binding proteins, it binds directly to 16S rRNA where it nucleates assembly of the head domain of the 30S subunit. This Welwitschia mirabilis (Tree tumbo) protein is Small ribosomal subunit protein uS7cz/uS7cy (rps7-A).